Consider the following 249-residue polypeptide: Basigin (249 aa).

The 82-residue stretch at 1–82 (AAGTIQTSVN…VGRSNIVVEG (82 aa)) folds into the Ig-like C2-type domain. Residues 1-187 (AAGTIQTSVN…MTLRVRSRLA (187 aa)) are Extracellular-facing. 2 disulfide bridges follow: Cys20–Cys66 and Cys105–Cys165. N-linked (GlcNAc...) asparagine glycans are attached at residues Asn23, Asn132, and Asn166. One can recognise an Ig-like V-type domain in the interval 84–179 (PRIKVGKKSE…TQGSVQEIMT (96 aa)). A helical transmembrane segment spans residues 188–208 (ALWPFLGIVAEVLVLVTIIFI). Topologically, residues 209–249 (YEKRRKPDQTLDEDDPGAAPLKGSGHHMNDKDKNVRQRNAT) are cytoplasmic. Positions 216–249 (DQTLDEDDPGAAPLKGSGHHMNDKDKNVRQRNAT) are disordered. Position 218 is a phosphothreonine (Thr218). The residue at position 232 (Ser232) is a Phosphoserine.

As to quaternary structure, homooligomer. Interacts with VEGFA, KDR/VEGFR2, PPIA/CYPA, SLC16A12, SLC16A11, ATP1B2, MAG, L1CAM and AJAP1. Interacts with SLC16A3; interaction mediates SLC16A3 targeting to the plasma membrane. Interacts with SLC16A1; interaction mediates SLC16A1 targeting to the plasma membrane. Interacts with PPIL2; regulates BSG transport to the cell membrane. Interacts with XKR8; promoting its localization at the cell membrane. Interacts with SLC16A6; this interaction mediates targeting to the plasma membrane.

The protein localises to the cell membrane. Its subcellular location is the endoplasmic reticulum membrane. The protein resides in the basolateral cell membrane. In terms of biological role, signaling receptor for cyclophilins, essential for PPIA/CYPA and PPIB/CYPB-dependent signaling related to chemotaxis and adhesion of immune cells. Plays an important role in targeting the monocarboxylate transporters SLC16A1/GLUT1, SLC16A3, SLC16A8, SLC16A11 and SLC16A12 to the plasma membrane. Acts as a coreceptor for vascular endothelial growth factor receptor 2 (KDR/VEGFR2) in endothelial cells enhancing its VEGFA-mediated activation and downstream signaling. Promotes angiogenesis through EPAS1/HIF2A-mediated up-regulation of VEGFA and KDR/VEGFR2 in endothelial cells. The sequence is that of Basigin (BSG) from Cricetulus griseus (Chinese hamster).